The primary structure comprises 524 residues: Vang-like protein 1 (524 aa).

A compositionally biased stretch (low complexity) spans 1–15 (MDTESTYSGYSYYSS). A disordered region spans residues 1-85 (MDTESTYSGY…TTAITGTSEH (85 aa)). Over 1–117 (MDTESTYSGY…KRYLGLTVAS (117 aa)) the chain is Cytoplasmic. Polar residues predominate over residues 73-85 (GETTTAITGTSEH). Residues Ser86 and Ser88 each carry the phosphoserine modification. The helical transmembrane segment at 118–138 (FLGLLVFLTPIAFILLPPILW) threads the bilayer. Residues 139-151 (RDELEPCGTICEG) lie on the Extracellular side of the membrane. The chain crosses the membrane as a helical span at residues 152 to 172 (LFISMAFKLLILLIGTWALFF). The Cytoplasmic portion of the chain corresponds to 173–182 (RKRRADMPRV). The helical transmembrane segment at 183–203 (FVFRALLLVLIFLFVVSYWLF) threads the bilayer. At 204–222 (YGVRILDSRDRNYQGIVQY) the chain is on the extracellular side. The helical transmembrane segment at 223–243 (AVSLVDALLFIHYLAIVLLEL) threads the bilayer. At 244–524 (RQLQPMFTLQ…VLRLQSETSV (281 aa)) the chain is on the cytoplasmic side.

The protein belongs to the Vang family. Heterodimer with VANGL2. Interacts through its C-terminal region with the N-terminal half of DVL1, DVL2 and DVL3. The PDZ domain of DVL1, DVL2 and DVL3 is required for the interaction. In terms of tissue distribution, according to PubMed:11956595, ubiquitously expressed. According to PubMed:12011995, expressed specifically in testis and ovary.

It is found in the cell membrane. In Homo sapiens (Human), this protein is Vang-like protein 1 (VANGL1).